Consider the following 90-residue polypeptide: Small ribosomal subunit protein bS18 (90 aa).

Basic and acidic residues predominate over residues methionine 1–arginine 14. The segment at methionine 1–methionine 23 is disordered.

This sequence belongs to the bacterial ribosomal protein bS18 family. As to quaternary structure, part of the 30S ribosomal subunit. Forms a tight heterodimer with protein bS6.

In terms of biological role, binds as a heterodimer with protein bS6 to the central domain of the 16S rRNA, where it helps stabilize the platform of the 30S subunit. The protein is Small ribosomal subunit protein bS18 of Clostridium acetobutylicum (strain ATCC 824 / DSM 792 / JCM 1419 / IAM 19013 / LMG 5710 / NBRC 13948 / NRRL B-527 / VKM B-1787 / 2291 / W).